A 721-amino-acid chain; its full sequence is Phosphoribosylformylglycinamidine synthase subunit PurL (721 aa).

The active site involves His47. Positions 50 and 89 each coordinate ATP. Glu91 lines the Mg(2+) pocket. Substrate is bound by residues 92-95 (SHNH) and Arg114. His93 acts as the Proton acceptor in catalysis. Asp115 is a Mg(2+) binding site. Gln238 provides a ligand contact to substrate. Asp266 contributes to the Mg(2+) binding site. Residue 310-312 (ESQ) participates in substrate binding. ATP contacts are provided by Asp490 and Gly527. Residue Asn528 participates in Mg(2+) binding. Position 530 (Ser530) interacts with substrate.

This sequence belongs to the FGAMS family. In terms of assembly, monomer. Part of the FGAM synthase complex composed of 1 PurL, 1 PurQ and 2 PurS subunits.

Its subcellular location is the cytoplasm. The catalysed reaction is N(2)-formyl-N(1)-(5-phospho-beta-D-ribosyl)glycinamide + L-glutamine + ATP + H2O = 2-formamido-N(1)-(5-O-phospho-beta-D-ribosyl)acetamidine + L-glutamate + ADP + phosphate + H(+). Its pathway is purine metabolism; IMP biosynthesis via de novo pathway; 5-amino-1-(5-phospho-D-ribosyl)imidazole from N(2)-formyl-N(1)-(5-phospho-D-ribosyl)glycinamide: step 1/2. Part of the phosphoribosylformylglycinamidine synthase complex involved in the purines biosynthetic pathway. Catalyzes the ATP-dependent conversion of formylglycinamide ribonucleotide (FGAR) and glutamine to yield formylglycinamidine ribonucleotide (FGAM) and glutamate. The FGAM synthase complex is composed of three subunits. PurQ produces an ammonia molecule by converting glutamine to glutamate. PurL transfers the ammonia molecule to FGAR to form FGAM in an ATP-dependent manner. PurS interacts with PurQ and PurL and is thought to assist in the transfer of the ammonia molecule from PurQ to PurL. The chain is Phosphoribosylformylglycinamidine synthase subunit PurL from Ruegeria sp. (strain TM1040) (Silicibacter sp.).